The following is a 137-amino-acid chain: Nucleoside diphosphate kinase (137 aa).

Lys-9, Phe-57, Arg-85, Thr-91, Arg-102, and Asn-112 together coordinate ATP. Catalysis depends on His-115, which acts as the Pros-phosphohistidine intermediate.

This sequence belongs to the NDK family. In terms of assembly, homotetramer. Requires Mg(2+) as cofactor.

Its subcellular location is the cytoplasm. The enzyme catalyses a 2'-deoxyribonucleoside 5'-diphosphate + ATP = a 2'-deoxyribonucleoside 5'-triphosphate + ADP. It carries out the reaction a ribonucleoside 5'-diphosphate + ATP = a ribonucleoside 5'-triphosphate + ADP. Major role in the synthesis of nucleoside triphosphates other than ATP. The ATP gamma phosphate is transferred to the NDP beta phosphate via a ping-pong mechanism, using a phosphorylated active-site intermediate. In Campylobacter jejuni subsp. doylei (strain ATCC BAA-1458 / RM4099 / 269.97), this protein is Nucleoside diphosphate kinase.